Here is a 409-residue protein sequence, read N- to C-terminus: Shaggy-related protein kinase NtK-1 (409 aa).

The tract at residues M1–E27 is disordered. In terms of domain architecture, Protein kinase spans Y73 to F357. Residues V79–V87 and K102 contribute to the ATP site. D198 acts as the Proton acceptor in catalysis.

It belongs to the protein kinase superfamily. CMGC Ser/Thr protein kinase family. GSK-3 subfamily. Autophosphorylated mainly on threonine and serine residues.

The catalysed reaction is L-seryl-[protein] + ATP = O-phospho-L-seryl-[protein] + ADP + H(+). The enzyme catalyses L-threonyl-[protein] + ATP = O-phospho-L-threonyl-[protein] + ADP + H(+). In terms of biological role, may mediate extracellular signals to regulate transcription in differentiating cells. This chain is Shaggy-related protein kinase NtK-1 (NTK-1), found in Nicotiana tabacum (Common tobacco).